A 169-amino-acid chain; its full sequence is Small ribosomal subunit protein uS5 (169 aa).

Positions 14-77 (MKEQVVDIRR…QAAKKNLLLV (64 aa)) constitute an S5 DRBM domain.

The protein belongs to the universal ribosomal protein uS5 family. In terms of assembly, part of the 30S ribosomal subunit. Contacts proteins S4 and S8.

Functionally, with S4 and S12 plays an important role in translational accuracy. Located at the back of the 30S subunit body where it stabilizes the conformation of the head with respect to the body. In Alkaliphilus metalliredigens (strain QYMF), this protein is Small ribosomal subunit protein uS5.